The primary structure comprises 159 residues: Cytochrome c nitrite reductase subunit NrfH (159 aa).

The Cytoplasmic segment spans residues Ser2 to Lys14. The chain crosses the membrane as a helical; Signal-anchor for type II membrane protein span at residues Leu15–Gly33. Topologically, residues Met34 to Glu159 are periplasmic. Heme contacts are provided by Cys43, Cys46, Met49, His61, and Cys66. Asn67 contacts a menaquinol. Heme contacts are provided by Cys69 and His70. A menaquinol-binding residues include Lys82 and Asp89. Asp89 is a heme binding site. Residues Gly99 to Asp100 are interaction with NrfA. Heme is bound by residues Cys116, Cys119, His120, Cys136, Cys139, His140, and His145. Residues Thr123–Asp158 form an interaction with NrfA region.

It belongs to the NapC/NirT/NrfH family. In terms of assembly, component of the NrfHA cytochrome c nitrite reductase complex composed of 4 NrfA catalytic subunits and 2 NrfH quinone-binding subunits. Interacts with NrfA homodimer. It depends on heme as a cofactor.

It localises to the cell inner membrane. Functionally, electron donor subunit of the cytochrome c nitrite reductase holocomplex NrfHA. Acquires electrons from the menaquinone pool and mediates their transfer to the catalytic subunit NrfA in an anaerobic respiratory process of nitrite. The other biological function of the NrfHA holocomplex is to detoxify nitrite. This function is essential for the survival of this organism as it enables it to overcome inhibition by nitrite, which is produced by other organisms living in the same environment. This is Cytochrome c nitrite reductase subunit NrfH from Nitratidesulfovibrio vulgaris (strain ATCC 29579 / DSM 644 / CCUG 34227 / NCIMB 8303 / VKM B-1760 / Hildenborough) (Desulfovibrio vulgaris).